Reading from the N-terminus, the 587-residue chain is Pentatricopeptide repeat-containing protein OGR1, mitochondrial (587 aa).

Residues Met-1–Leu-30 constitute a mitochondrion transit peptide. 8 PPR repeats span residues Asp-145–Thr-179, Phe-200–Leu-203, Asn-217–Arg-251, Asn-252–Leu-286, Val-287–Arg-315, Asp-319–Ala-349, Asn-351–Pro-381, and Asp-383–Val-417. Residues Leu-386 to Asp-461 are type E motif. Positions Gly-462–Ser-492 are type E(+) motif. The type DYW motif stretch occupies residues Glu-493–Trp-587.

It is found in the mitochondrion. Its function is as follows. Involved in multiple sites RNA editing events in mitochondria. Essential for C-to-U RNA editing at seven specific sites of nad2, nad4, cox2, cox3 and ccmC transcripts, all coding for proteins involved in the mitochondrial electron transport chain coupled to ATP generation. Required for normal growth and development. The chain is Pentatricopeptide repeat-containing protein OGR1, mitochondrial from Oryza sativa subsp. japonica (Rice).